The following is a 214-amino-acid chain: Phosphatidylserine decarboxylase proenzyme (214 aa).

Ser-182 functions as the Schiff-base intermediate with substrate; via pyruvic acid in the catalytic mechanism. A Pyruvic acid (Ser); by autocatalysis modification is found at Ser-182.

The protein belongs to the phosphatidylserine decarboxylase family. PSD-A subfamily. Heterodimer of a large membrane-associated beta subunit and a small pyruvoyl-containing alpha subunit. Pyruvate serves as cofactor. Is synthesized initially as an inactive proenzyme. Formation of the active enzyme involves a self-maturation process in which the active site pyruvoyl group is generated from an internal serine residue via an autocatalytic post-translational modification. Two non-identical subunits are generated from the proenzyme in this reaction, and the pyruvate is formed at the N-terminus of the alpha chain, which is derived from the carboxyl end of the proenzyme. The post-translation cleavage follows an unusual pathway, termed non-hydrolytic serinolysis, in which the side chain hydroxyl group of the serine supplies its oxygen atom to form the C-terminus of the beta chain, while the remainder of the serine residue undergoes an oxidative deamination to produce ammonia and the pyruvoyl prosthetic group on the alpha chain.

The protein resides in the cell membrane. It catalyses the reaction a 1,2-diacyl-sn-glycero-3-phospho-L-serine + H(+) = a 1,2-diacyl-sn-glycero-3-phosphoethanolamine + CO2. Its pathway is phospholipid metabolism; phosphatidylethanolamine biosynthesis; phosphatidylethanolamine from CDP-diacylglycerol: step 2/2. Its function is as follows. Catalyzes the formation of phosphatidylethanolamine (PtdEtn) from phosphatidylserine (PtdSer). This Burkholderia vietnamiensis (strain G4 / LMG 22486) (Burkholderia cepacia (strain R1808)) protein is Phosphatidylserine decarboxylase proenzyme.